We begin with the raw amino-acid sequence, 249 residues long: Elongation factor Ts (249 aa).

The segment at 82–85 (TDFV) is involved in Mg(2+) ion dislocation from EF-Tu. The interval 215–249 (QAGQLAPEAESTTETADATSETTTEKSSAKKKKKK) is disordered. Residues 222–236 (EAESTTETADATSET) show a composition bias toward low complexity.

Belongs to the EF-Ts family.

It localises to the cytoplasm. In terms of biological role, associates with the EF-Tu.GDP complex and induces the exchange of GDP to GTP. It remains bound to the aminoacyl-tRNA.EF-Tu.GTP complex up to the GTP hydrolysis stage on the ribosome. In Rippkaea orientalis (strain PCC 8801 / RF-1) (Cyanothece sp. (strain PCC 8801)), this protein is Elongation factor Ts.